A 340-amino-acid polypeptide reads, in one-letter code: MLSLSKNWNTLIKPNKVAYENFPETNNKAKIVVEPLERGFGLTLGNAMRRVLLSSLQGAAITSIKIPAIEHEFSSIPGVKEDVSEVILNIKGIEVKMHVAEKRIMKLKATGPCVVTAGMIETGHDVEILNPDHVICDLAKDKQLEMELTCKVGKGYVLSTNSYEDNLPIGEIAIDALFNPVKSVTYKVENTRVGQVTDYDKLIMFVETNGDVLPEMAVGLAARILQEQLQLFISFEEQEEDKQVKTDTLPFSPYLLKRVDELELSVRSANCLKNDNIIYIGDLVKRTESDMLRTPNFGRKSLNEIKEILAKFNLRFGMDVPDWPPENIQELSKRYEDSYN.

The alpha N-terminal domain (alpha-NTD) stretch occupies residues 1-236 (MLSLSKNWNT…EQLQLFISFE (236 aa)). Positions 251 to 340 (FSPYLLKRVD…LSKRYEDSYN (90 aa)) are alpha C-terminal domain (alpha-CTD).

It belongs to the RNA polymerase alpha chain family. In terms of assembly, homodimer. The RNAP catalytic core consists of 2 alpha, 1 beta, 1 beta' and 1 omega subunit. When a sigma factor is associated with the core the holoenzyme is formed, which can initiate transcription.

It carries out the reaction RNA(n) + a ribonucleoside 5'-triphosphate = RNA(n+1) + diphosphate. Functionally, DNA-dependent RNA polymerase catalyzes the transcription of DNA into RNA using the four ribonucleoside triphosphates as substrates. The sequence is that of DNA-directed RNA polymerase subunit alpha from Rickettsia conorii (strain ATCC VR-613 / Malish 7).